A 349-amino-acid polypeptide reads, in one-letter code: 11-beta-hydroxysteroid dehydrogenase 1A (349 aa).

Residues 10-30 traverse the membrane as a helical; Signal-anchor for type II membrane protein segment; it reads LTAPFFTFFGLCFFLPPFYFF. Residues 54–80 and aspartate 105 each bind NADP(+); that span reads GASS…TARR. Serine 184 is a substrate binding site. Tyrosine 197 (proton acceptor) is an active-site residue. Residues 197–201 and lysine 201 each bind NADP(+); that span reads YNASK.

Belongs to the short-chain dehydrogenases/reductases (SDR) family. Expressed in the above-ground part of seedlings, especially in the vascular tissues. Also detected in the buds and silique pedicels. Highly induced in oil-accumulating tissues of maturing seeds.

The protein localises to the lipid droplet. Its subcellular location is the membrane. The catalysed reaction is an 11beta-hydroxysteroid + NADP(+) = an 11-oxosteroid + NADPH + H(+). The enzyme catalyses 17beta-estradiol + NADP(+) = estrone + NADPH + H(+). It catalyses the reaction corticosterone + NADP(+) = 11-dehydrocorticosterone + NADPH + H(+). It carries out the reaction cortisone + NADPH + H(+) = cortisol + NADP(+). In terms of biological role, catalyzes 11-beta, 17-beta-hydroxysteroid and reduces 17-beta-ketosteroids. Involved in regulating plant growth and development, probably promoting or mediating brassinosteroid effects. Plays a role during seed maturation. In Arabidopsis thaliana (Mouse-ear cress), this protein is 11-beta-hydroxysteroid dehydrogenase 1A (HSD1).